The chain runs to 517 residues: GMP synthase [glutamine-hydrolyzing] (517 aa).

Residues 9–202 (KIIVLDYGSQ…AFNVCKAKGD (194 aa)) form the Glutamine amidotransferase type-1 domain. The active-site Nucleophile is C86. Active-site residues include H176 and E178. One can recognise a GMPS ATP-PPase domain in the interval 203–392 (WSMDSFIDME…LGMPDEIVWR (190 aa)). 230-236 (SGGVDSS) is an ATP binding site.

Homodimer.

It catalyses the reaction XMP + L-glutamine + ATP + H2O = GMP + L-glutamate + AMP + diphosphate + 2 H(+). It functions in the pathway purine metabolism; GMP biosynthesis; GMP from XMP (L-Gln route): step 1/1. In terms of biological role, catalyzes the synthesis of GMP from XMP. The polypeptide is GMP synthase [glutamine-hydrolyzing] (Streptococcus mutans serotype c (strain ATCC 700610 / UA159)).